Consider the following 135-residue polypeptide: Histone H2A (135 aa).

Positions 1-24 are disordered; the sequence is MTGGGKSGGKASSGKNAQSRSSKA. N6-acetyllysine is present on residues K6 and K10. An N5-methylglutamine modification is found at Q107. S132 is modified (phosphoserine). The short motif at 132-133 is the [ST]-Q motif element; that stretch reads SQ.

It belongs to the histone H2A family. The nucleosome is a histone octamer containing two molecules each of H2A, H2B, H3 and H4 assembled in one H3-H4 heterotetramer and two H2A-H2B heterodimers. The octamer wraps approximately 147 bp of DNA. Post-translationally, phosphorylated to form H2AS128ph (gamma-H2A) in response to DNA double-strand breaks (DSBs) generated by exogenous genotoxic agents and by stalled replication forks. Phosphorylation is dependent on the DNA damage checkpoint kinases MEC1/ATR and TEL1/ATM, spreads on either side of a detected DSB site and may mark the surrounding chromatin for recruitment of proteins required for DNA damage signaling and repair. Gamma-H2A is removed from the DNA prior to the strand invasion-primer extension step of the repair process and subsequently dephosphorylated. Dephosphorylation is necessary for efficient recovery from the DNA damage checkpoint. In terms of processing, acetylated by ESA1 to form H2AK4ac and H2AK7ac.

The protein resides in the nucleus. The protein localises to the chromosome. In terms of biological role, core component of nucleosome which plays a central role in DNA double strand break (DSB) repair. Nucleosomes wrap and compact DNA into chromatin, limiting DNA accessibility to the cellular machineries which require DNA as a template. Histones thereby play a central role in transcription regulation, DNA repair, DNA replication and chromosomal stability. DNA accessibility is regulated via a complex set of post-translational modifications of histones, also called histone code, and nucleosome remodeling. The chain is Histone H2A (HTA1) from Podospora anserina (Pleurage anserina).